Reading from the N-terminus, the 426-residue chain is Serine hydroxymethyltransferase (426 aa).

(6S)-5,6,7,8-tetrahydrofolate contacts are provided by residues Leu-118 and 122–124 (GHL). At Lys-227 the chain carries N6-(pyridoxal phosphate)lysine.

The protein belongs to the SHMT family. Homodimer. It depends on pyridoxal 5'-phosphate as a cofactor.

It localises to the cytoplasm. The catalysed reaction is (6R)-5,10-methylene-5,6,7,8-tetrahydrofolate + glycine + H2O = (6S)-5,6,7,8-tetrahydrofolate + L-serine. It functions in the pathway one-carbon metabolism; tetrahydrofolate interconversion. It participates in amino-acid biosynthesis; glycine biosynthesis; glycine from L-serine: step 1/1. Its function is as follows. Catalyzes the reversible interconversion of serine and glycine with tetrahydrofolate (THF) serving as the one-carbon carrier. This reaction serves as the major source of one-carbon groups required for the biosynthesis of purines, thymidylate, methionine, and other important biomolecules. Also exhibits THF-independent aldolase activity toward beta-hydroxyamino acids, producing glycine and aldehydes, via a retro-aldol mechanism. The sequence is that of Serine hydroxymethyltransferase from Mycobacterium avium (strain 104).